The sequence spans 212 residues: Large ribosomal subunit protein uL3 (212 aa).

Residues 135–156 are disordered; it reads MTHGNSRSHRVPGSIGQNQSPG. Gln153 carries the N5-methylglutamine modification.

It belongs to the universal ribosomal protein uL3 family. As to quaternary structure, part of the 50S ribosomal subunit. Forms a cluster with proteins L14 and L19. In terms of processing, methylated by PrmB.

Its function is as follows. One of the primary rRNA binding proteins, it binds directly near the 3'-end of the 23S rRNA, where it nucleates assembly of the 50S subunit. In Tolumonas auensis (strain DSM 9187 / NBRC 110442 / TA 4), this protein is Large ribosomal subunit protein uL3.